Consider the following 1057-residue polypeptide: Carbamoyl phosphate synthase large chain (1057 aa).

A carboxyphosphate synthetic domain region spans residues 1 to 401 (MPKRDDIKTI…SLLKAIRSLE (401 aa)). ATP is bound by residues arginine 129, arginine 169, glycine 175, glycine 176, lysine 208, isoleucine 210, glutamate 215, glycine 241, isoleucine 242, histidine 243, glutamine 284, and glutamate 298. One can recognise an ATP-grasp 1 domain in the interval 133-327 (RTLMNDLNVP…IAKLAAKIAV (195 aa)). Mg(2+) contacts are provided by glutamine 284, glutamate 298, and asparagine 300. Mn(2+) contacts are provided by glutamine 284, glutamate 298, and asparagine 300. Residues 402–546 (YGVHHLGLSN…YGTYEYENES (145 aa)) are oligomerization domain. The carbamoyl phosphate synthetic domain stretch occupies residues 547–929 (IVTDKEKILV…ALYKGLTGSG (383 aa)). Residues 671–861 (EALLREIAVP…MAQLAMRAIM (191 aa)) enclose the ATP-grasp 2 domain. Arginine 707, arginine 746, leucine 748, glutamate 752, glycine 777, valine 778, histidine 779, serine 780, glutamine 820, and glutamate 832 together coordinate ATP. Positions 820, 832, and 834 each coordinate Mg(2+). Glutamine 820, glutamate 832, and asparagine 834 together coordinate Mn(2+). In terms of domain architecture, MGS-like spans 930 to 1057 (FEVKDHGTVL…ESMTFTMRNV (128 aa)). Residues 930–1057 (FEVKDHGTVL…ESMTFTMRNV (128 aa)) are allosteric domain.

It belongs to the CarB family. As to quaternary structure, composed of two chains; the small (or glutamine) chain promotes the hydrolysis of glutamine to ammonia, which is used by the large (or ammonia) chain to synthesize carbamoyl phosphate. Tetramer of heterodimers (alpha,beta)4. Mg(2+) serves as cofactor. It depends on Mn(2+) as a cofactor.

It carries out the reaction hydrogencarbonate + L-glutamine + 2 ATP + H2O = carbamoyl phosphate + L-glutamate + 2 ADP + phosphate + 2 H(+). The catalysed reaction is hydrogencarbonate + NH4(+) + 2 ATP = carbamoyl phosphate + 2 ADP + phosphate + 2 H(+). Its pathway is amino-acid biosynthesis; L-arginine biosynthesis; carbamoyl phosphate from bicarbonate: step 1/1. It participates in pyrimidine metabolism; UMP biosynthesis via de novo pathway; (S)-dihydroorotate from bicarbonate: step 1/3. Its function is as follows. Large subunit of the glutamine-dependent carbamoyl phosphate synthetase (CPSase). CPSase catalyzes the formation of carbamoyl phosphate from the ammonia moiety of glutamine, carbonate, and phosphate donated by ATP, constituting the first step of 2 biosynthetic pathways, one leading to arginine and/or urea and the other to pyrimidine nucleotides. The large subunit (synthetase) binds the substrates ammonia (free or transferred from glutamine from the small subunit), hydrogencarbonate and ATP and carries out an ATP-coupled ligase reaction, activating hydrogencarbonate by forming carboxy phosphate which reacts with ammonia to form carbamoyl phosphate. The chain is Carbamoyl phosphate synthase large chain from Staphylococcus epidermidis (strain ATCC 12228 / FDA PCI 1200).